We begin with the raw amino-acid sequence, 360 residues long: Methyltransferase pvhD (360 aa).

Residues 201-202 (SG), aspartate 227, 251-252 (DL), arginine 267, and arginine 268 contribute to the S-adenosyl-L-methionine site.

Belongs to the class I-like SAM-binding methyltransferase superfamily. Cation-independent O-methyltransferase family.

It participates in secondary metabolite biosynthesis. Methyltransferase; part of the gene cluster that mediates the biosynthesis of varicidin A, an antifungal natural product containing a cis-octahydrodecalin core. The PKS module of pvhA together with the enoylreductase pvhC catalyze the formation of the polyketide unit which is then conjugated to L-isoleucine by the condensation domain of the NRPS module. Activity of the Dieckmann cyclase domain (RED) of pvhA results in release of an acyclic tetramate. The cytochrome P450 monooxygenase pvhE then catalyzes the oxidation of the C21 methyl group to a to carboxylate group. The methyltransferase pvhD then further methylates the pvhE product. The Diels-Alderase pvhB is able to catalyze Diels-Alder cycloaddition using both pvhE and pvhD products as substrates to form the decalin ring, yielding varicidin B and A, respectively. The polypeptide is Methyltransferase pvhD (Talaromyces variabilis (Penicillium variabile)).